Consider the following 389-residue polypeptide: DNA damage checkpoint control protein RAD17 (389 aa).

The tract at residues Leu358–Leu389 is disordered. The segment covering Pro380–Leu389 has biased composition (polar residues).

It belongs to the rad1 family. In terms of assembly, component of the checkpoint clamp complex composed of DDC1, MEC3 and RAD17.

Its subcellular location is the nucleus. In terms of biological role, component of the checkpoint clamp complex involved in the surveillance mechanism that allows the DNA repair pathways to act to restore the integrity of the DNA prior to DNA synthesis or separation of the replicated chromosomes. The chain is DNA damage checkpoint control protein RAD17 (RAD17) from Eremothecium gossypii (strain ATCC 10895 / CBS 109.51 / FGSC 9923 / NRRL Y-1056) (Yeast).